Consider the following 910-residue polypeptide: MEIKHDYNVQLFKEKGFIRKQCKECNQYFWTLDPKRETCGDSPCDEYSFIGSSITNKEYTYNEMVKEFLNFFDKNGHTPIKRYPVSARRWRDDILLTIASIAVFQPWVTKGIVKPVANPLVIAQPCIRLNDIDNVGRTGRHMTCFTMGGHHAFNTDEDFKYWTDRTVELCYNFFTNLGIDGSSITFIESWWEGGGNAGPCYEVITHGVELATLVFMQYEKTEQGDYIEMPLKIVDTGYGLERFVWASKGTPTVYEAVFGDIIGKLMDDANINMNDIGPKILAESATLAGLMDIENVGDLRILRQKVAEKLNLDVNELDSILSPIENIYAIADHTRCLAFMLGDGIVPSNVKDGYLARLLVRKTLRYIKNVGLSLSLKDIVAMQLENLKEIYPELMDMKEYIMDVLEEEENKYIQTITKGKGAVERIAKSKDEITLDDLIELYDSKGLPPEVVRDIVEEINKKGSKNNKGNKTIKITVPDNFYTIVAERHEEKKEDSKSEKGENTAEKSTISINLDDIPETELLFYSNPYQKEVEAKILKIIGNVVILDKTVFYPEGGGQKYDIGLIGNKKIISVQKNNNGIVCHTVENTDGLNEEDTIIAKLNWENRLNLMRNHTATHIINAAASKVLGKHIWQTGSNVESNKARLDITHYKRITREEIKEIEKIANQIVLDAIPVKSTVMGRNEAEQKYGFKIYQGGVVPGNILRILDIEGVDVEACGGTHCQNTSEVGYIKILKTERIQDGVERLEYTSGINSVNEVSLMEDILLNASSIVGVPCENLPKTVNRFFEEWKEQKKIIEELHKKIGELEKGNLNDKFEKVGKYDLLVEKVEGAPKELMSIADNLVNEKDNSIVILLNNSGYILCKCGEKVEIKMGELLRKIAKGGGKDKMAQGKCADDIETLKSKVVGEL.

Basic and acidic residues predominate over residues 488–505 (RHEEKKEDSKSEKGENTA). Positions 488–507 (RHEEKKEDSKSEKGENTAEK) are disordered. Zn(2+)-binding residues include His-614, His-618, Cys-718, and His-722.

This sequence belongs to the class-II aminoacyl-tRNA synthetase family. The cofactor is Zn(2+).

The protein localises to the cytoplasm. The catalysed reaction is tRNA(Ala) + L-alanine + ATP = L-alanyl-tRNA(Ala) + AMP + diphosphate. Its function is as follows. Catalyzes the attachment of alanine to tRNA(Ala) in a two-step reaction: alanine is first activated by ATP to form Ala-AMP and then transferred to the acceptor end of tRNA(Ala). Also edits incorrectly charged Ser-tRNA(Ala) and Gly-tRNA(Ala) via its editing domain. In Methanococcus aeolicus (strain ATCC BAA-1280 / DSM 17508 / OCM 812 / Nankai-3), this protein is Alanine--tRNA ligase.